The primary structure comprises 109 residues: Large ribosomal subunit protein eL30 (109 aa).

The protein belongs to the eukaryotic ribosomal protein eL30 family.

This Methanopyrus kandleri (strain AV19 / DSM 6324 / JCM 9639 / NBRC 100938) protein is Large ribosomal subunit protein eL30.